Reading from the N-terminus, the 551-residue chain is Arginine--tRNA ligase (551 aa).

A 'HIGH' region motif is present at residues 124-134 (ANPTGPLHIGH).

Belongs to the class-I aminoacyl-tRNA synthetase family. Monomer.

It localises to the cytoplasm. It carries out the reaction tRNA(Arg) + L-arginine + ATP = L-arginyl-tRNA(Arg) + AMP + diphosphate. The chain is Arginine--tRNA ligase from Solidesulfovibrio magneticus (strain ATCC 700980 / DSM 13731 / RS-1) (Desulfovibrio magneticus).